We begin with the raw amino-acid sequence, 1056 residues long: E3 SUMO-protein ligase ZNF451 (1056 aa).

A disordered region spans residues 1–39; that stretch reads MGDPGPEIIESVPPAGPEASESTTDENEDDIQFVSEGPL. The sufficient for E3 SUMO-protein ligase activity stretch occupies residues 1-246; it reads MGDPGPEIIE…AADGHSNSLL (246 aa). Positions 1–344 are important for interaction with SUMO1 and SUMO2; that stretch reads MGDPGPEIIE…RVRCQNAGPV (344 aa). The tract at residues 30-37 is interaction with SUMO2 1; the sequence is DIQFVSEG. The short motif at 38–41 is the PLRP element; the sequence is PLRP. The interval 42–50 is interaction with SUMO2 2; sequence VLEYIDLVS. Glycyl lysine isopeptide (Lys-Gly) (interchain with G-Cter in SUMO2) cross-links involve residues Lys75, Lys77, Lys106, Lys139, and Lys153. Ser155 is modified (phosphoserine). Arg158 carries the omega-N-methylarginine modification. A Glycyl lysine isopeptide (Lys-Gly) (interchain with G-Cter in SUMO2) cross-link involves residue Lys167. An important for interaction with SMAD4 region spans residues 168–521; that stretch reads PILCPIMHCN…HMSRFHGGAH (354 aa). The segment at 169 to 195 adopts a C2H2-type 1 zinc-finger fold; that stretch reads ILCPIMHCNKEFDNGHLLLGHLKRFDH. Residues 212 to 234 form a C2H2-type 2; degenerate zinc finger; that stretch reads FACAVCYEHFVTQQQYKDHLLSR. The segment at 253 to 277 adopts a C2H2-type 3 zinc-finger fold; it reads YACPQCFLLFSTKDECLKHMSTKNH. Residues Lys270, Lys275, Lys283, Lys288, Lys301, and Lys309 each participate in a glycyl lysine isopeptide (Lys-Gly) (interchain with G-Cter in SUMO2) cross-link. The segment at 315–338 adopts a C2H2-type 4; atypical zinc-finger fold; it reads VKCVACHQTLRSHMELTAHFRVRC. The C2H2-type 5 zinc finger occupies 362-385; it reads GYCSDCNQVFMDVASTQSHKNSGH. A Glycyl lysine isopeptide (Lys-Gly) (interchain with G-Cter in SUMO2) cross-link involves residue Lys420. At Ser429 the chain carries Phosphoserine. A Glycyl lysine isopeptide (Lys-Gly) (interchain with G-Cter in SUMO2) cross-link involves residue Lys431. 2 consecutive C2H2-type zinc fingers follow at residues 494–517 and 527–550; these read YKCVVCGKVCEDSGVMRLHMSRFH and FWCRTCKKELVKKDAIMAHITEFH. Glycyl lysine isopeptide (Lys-Gly) (interchain with G-Cter in SUMO2) cross-links involve residues Lys539 and Lys583. The segment at 604-629 adopts a C2H2-type 8; atypical zinc-finger fold; sequence WQCRICEDMFESQECVKQHCMSLTSH. 2 C2H2-type zinc fingers span residues 634-657 and 665-688; these read YSCAHCRKTFHKVETLYRHCQDEH and YFCGLCDLIFNKEEEFLSHYKEHH. Residue Lys645 forms a Glycyl lysine isopeptide (Lys-Gly) (interchain with G-Cter in SUMO2) linkage. Lys704 is covalently cross-linked (Glycyl lysine isopeptide (Lys-Gly) (interchain with G-Cter in SUMO1); alternate). Lys704 participates in a covalent cross-link: Glycyl lysine isopeptide (Lys-Gly) (interchain with G-Cter in SUMO2); alternate. Glycyl lysine isopeptide (Lys-Gly) (interchain with G-Cter in SUMO2) cross-links involve residues Lys729 and Lys746. C2H2-type zinc fingers lie at residues 751–774 and 787–810; these read FRCSSCSATAQNVTDINTHVCQVH and IKCGICTKAFQNTESAQQHFHRKH. Glycyl lysine isopeptide (Lys-Gly) (interchain with G-Cter in SUMO2) cross-links involve residues Lys788, Lys815, Lys843, Lys849, Lys947, Lys988, and Lys989. Disordered regions lie at residues 806–830 and 839–858; these read FHRKHAALQKPTATPGGANRSSTCQ and EKNLKQPSSQKHSDVEKGAE. Basic and acidic residues predominate over residues 849–858; that stretch reads KHSDVEKGAE. The interval 1019 to 1045 is disordered; the sequence is KECDSDDSSGMKGSPAEELRATEDVEL. Residues 1033–1045 show a composition bias toward basic and acidic residues; the sequence is PAEELRATEDVEL. The interval 1045-1056 is important for ubiquitin binding; it reads LEEAIRRSLEEM.

This sequence belongs to the krueppel C2H2-type zinc-finger protein family. In terms of assembly, homooligomer. Interacts (via N-terminal region) with SUMO1. Interacts (via N-terminal region) with SUMO2. Interacts simultaneously with two SUMO2 chains. Identified in a complex with SUMO2 and UBE2I/UBC9, where one ZNF451 interacts with one UBE2I/UBC9 and two SUMO2 chains, one bound to the UBE2I/UBC9 active site and the other to another region of the same UBE2I/UBC9 molecule. Interacts (via C-terminus) with ubiquitin. Interacts (via N-terminal zinc-finger domains) with SMAD4 (via MH2 domain). Interacts with SMAD2 and SMAD3. Identified in a complex that contains at least ZNF451, SMAD2, SMAD3 and SMAD4. Interacts with EP300. Inhibits interaction between EP300 and the SMAD4 complex. Interacts with SIMC1. Post-translationally, sumoylated. Predominantly sumoylated on the N-terminal region that is important for interaction with SUMO1 and SUMO2. Sumoylation is important for localization in nuclear granules; desumoylation leads to diffuse nucleoplasmic location. Autosumoylated (in vitro). Sumoylation enhances E3 SUMO-protein ligase activity.

It is found in the nucleus. Its subcellular location is the PML body. The protein localises to the nucleoplasm. It functions in the pathway protein modification; protein sumoylation. Functionally, E3 SUMO-protein ligase; has a preference for SUMO2 and SUMO3 and facilitates UBE2I/UBC9-mediated sumoylation of target proteins. Plays a role in protein SUMO2 modification in response to stress caused by DNA damage and by proteasome inhibitors (in vitro). Required for MCM4 sumoylation. Has no activity with SUMO1. Preferentially transfers an additional SUMO2 chain onto the SUMO2 consensus site 'Lys-11'. Negatively regulates transcriptional activation mediated by the SMAD4 complex in response to TGF-beta signaling. Inhibits EP300-mediated acetylation of histone H3 at 'Lys-9'. Plays a role in regulating the transcription of AR targets. The protein is E3 SUMO-protein ligase ZNF451 (Znf451) of Mus musculus (Mouse).